Here is a 137-residue protein sequence, read N- to C-terminus: Acidic phospholipase A2 beta-bungarotoxin A chain (137 aa).

The N-terminal stretch at 1–9 is a signal peptide; it reads AVCVSLLGA. The propeptide occupies 10–17; the sequence is ANIPPHPL. Disulfide bonds link Cys-44–Cys-136, Cys-46–Cys-62, Cys-61–Cys-117, Cys-68–Cys-110, Cys-78–Cys-103, and Cys-96–Cys-108. Tyr-45, Gly-47, and Gly-49 together coordinate Ca(2+). Residue His-65 is part of the active site. Asp-66 contributes to the Ca(2+) binding site. Residue Asp-111 is part of the active site.

Belongs to the phospholipase A2 family. Group I subfamily. D49 sub-subfamily. In terms of assembly, heterodimer; disulfide-linked. The A chain has phospholipase A2 activity and the B chain shows homology with the basic protease inhibitors. The cofactor is Ca(2+). In terms of tissue distribution, expressed by the venom gland.

It localises to the secreted. The enzyme catalyses a 1,2-diacyl-sn-glycero-3-phosphocholine + H2O = a 1-acyl-sn-glycero-3-phosphocholine + a fatty acid + H(+). In terms of biological role, beta bungarotoxin is a presynaptic neurotoxin. The A chain has phospholipase activity. PLA2 catalyzes the calcium-dependent hydrolysis of the 2-acyl groups in 3-sn-phosphoglycerides. This chain is Acidic phospholipase A2 beta-bungarotoxin A chain, found in Bungarus candidus (Malayan krait).